A 127-amino-acid chain; its full sequence is Large ribosomal subunit protein bL20 (127 aa).

It belongs to the bacterial ribosomal protein bL20 family.

Its function is as follows. Binds directly to 23S ribosomal RNA and is necessary for the in vitro assembly process of the 50S ribosomal subunit. It is not involved in the protein synthesizing functions of that subunit. In Akkermansia muciniphila (strain ATCC BAA-835 / DSM 22959 / JCM 33894 / BCRC 81048 / CCUG 64013 / CIP 107961 / Muc), this protein is Large ribosomal subunit protein bL20.